The following is a 677-amino-acid chain: Beta-galactosidase (677 aa).

Residues 1 to 23 form the signal peptide; the sequence is MPGFLVRILPLLLVLLLLGPTRG. Residues 24 to 28 constitute a propeptide that is removed on maturation; it reads LRNAT. An N-linked (GlcNAc...) asparagine glycan is attached at Asn-26. Residues Tyr-83, Glu-129, and Asn-187 each contribute to the substrate site. Glu-188 acts as the Proton donor in catalysis. A disulfide bridge connects residues Cys-195 and Cys-230. N-linked (GlcNAc...) asparagine glycosylation is present at Asn-247. The Nucleophile role is filled by Glu-268. Tyr-333 is a substrate binding site. Asn-464, Asn-498, Asn-542, Asn-545, and Asn-555 each carry an N-linked (GlcNAc...) asparagine glycan. The cysteines at positions 626 and 634 are disulfide-linked. The disordered stretch occupies residues 650 to 677; it reads YDHPSKPVEKRLMPPPPQKNKDSWLDHV. Composition is skewed to basic and acidic residues over residues 652–661 and 668–677; these read HPSKPVEKRL and KNKDSWLDHV.

The protein belongs to the glycosyl hydrolase 35 family. In terms of assembly, homodimer. May form higher multimers. In terms of tissue distribution, detected in placenta (at protein level). Detected in fibroblasts and testis.

Its subcellular location is the lysosome. The protein resides in the cytoplasm. The protein localises to the perinuclear region. It catalyses the reaction Hydrolysis of terminal non-reducing beta-D-galactose residues in beta-D-galactosides.. Its function is as follows. Cleaves beta-linked terminal galactosyl residues from gangliosides, glycoproteins, and glycosaminoglycans. Has no beta-galactosidase catalytic activity, but plays functional roles in the formation of extracellular elastic fibers (elastogenesis) and in the development of connective tissue. Seems to be identical to the elastin-binding protein (EBP), a major component of the non-integrin cell surface receptor expressed on fibroblasts, smooth muscle cells, chondroblasts, leukocytes, and certain cancer cell types. In elastin producing cells, associates with tropoelastin intracellularly and functions as a recycling molecular chaperone which facilitates the secretions of tropoelastin and its assembly into elastic fibers. The chain is Beta-galactosidase (GLB1) from Homo sapiens (Human).